The primary structure comprises 180 residues: MVKVGITGPVGSIKAEALAKIMEMLANEGKIIEGFLVSEKVEHNKLISYSVMDILSKKKAEFARQDIVSRVKIDKLGVDTRLLEDIVIPSLERAKSEADVIIIDELGKIENTTKNIKNIIEDVLKLDKTIIVTLHKKSRNPVLQEFRSLESVRVFDITPINKNILPFKILKVINGEEESI.

Residues 8 to 15 (GPVGSIKA) and 100 to 107 (VIIIDELG) each bind ATP.

It belongs to the THEP1 NTPase family.

It catalyses the reaction a ribonucleoside 5'-triphosphate + H2O = a ribonucleoside 5'-diphosphate + phosphate + H(+). Functionally, has nucleotide phosphatase activity towards ATP, GTP, CTP, TTP and UTP. May hydrolyze nucleoside diphosphates with lower efficiency. This is Nucleoside-triphosphatase THEP1 from Picrophilus torridus (strain ATCC 700027 / DSM 9790 / JCM 10055 / NBRC 100828 / KAW 2/3).